A 453-amino-acid chain; its full sequence is Chromosomal replication initiator protein DnaA (453 aa).

The domain I, interacts with DnaA modulators stretch occupies residues Met1–Thr74. The tract at residues Thr74 to Thr113 is domain II. Residues Gly114–Ala331 are domain III, AAA+ region. ATP-binding residues include Gly158, Gly160, Lys161, and Thr162. Residues Arg332–Lys453 are domain IV, binds dsDNA.

Belongs to the DnaA family. As to quaternary structure, oligomerizes as a right-handed, spiral filament on DNA at oriC.

Its subcellular location is the cytoplasm. In terms of biological role, plays an essential role in the initiation and regulation of chromosomal replication. ATP-DnaA binds to the origin of replication (oriC) to initiate formation of the DNA replication initiation complex once per cell cycle. Binds the DnaA box (a 9 base pair repeat at the origin) and separates the double-stranded (ds)DNA. Forms a right-handed helical filament on oriC DNA; dsDNA binds to the exterior of the filament while single-stranded (ss)DNA is stabiized in the filament's interior. The ATP-DnaA-oriC complex binds and stabilizes one strand of the AT-rich DNA unwinding element (DUE), permitting loading of DNA polymerase. After initiation quickly degrades to an ADP-DnaA complex that is not apt for DNA replication. Binds acidic phospholipids. The polypeptide is Chromosomal replication initiator protein DnaA (Streptococcus pneumoniae serotype 19F (strain G54)).